The following is a 259-amino-acid chain: MNNLSLANEKTKIQVRGLEFFYNNQKSLKSIDMTIPEKRITAIIGPSGCGKSTLLRVFNRIYAMYPKQEARGEVLLNGENILAPGYSMNRLRSHVGMVFQKPVPFPMSIFDNISYAIKHHEKLSRREMEDRVEQALRGAALWDEVKDKLKQSATGLSGGQQQRLCIARTIALRPQVLLLDEPTSALDPISTGRIEQLITELKEQFTVIIVTHNMQQAARCSDYTAFMFMGELIEHGDTDTIFTKPSKTQTEDYITGRFG.

The ABC transporter domain occupies 13–254 (IQVRGLEFFY…PSKTQTEDYI (242 aa)). 45–52 (GPSGCGKS) is an ATP binding site.

The protein belongs to the ABC transporter superfamily. Phosphate importer (TC 3.A.1.7) family. In terms of assembly, the complex is composed of two ATP-binding proteins (PstB), two transmembrane proteins (PstC and PstA) and a solute-binding protein (PstS).

It localises to the cell inner membrane. It catalyses the reaction phosphate(out) + ATP + H2O = ADP + 2 phosphate(in) + H(+). In terms of biological role, part of the ABC transporter complex PstSACB involved in phosphate import. Responsible for energy coupling to the transport system. The polypeptide is Phosphate import ATP-binding protein PstB 1 (Pseudomonas savastanoi pv. phaseolicola (strain 1448A / Race 6) (Pseudomonas syringae pv. phaseolicola (strain 1448A / Race 6))).